Consider the following 423-residue polypeptide: GTPase Obg (423 aa).

The Obg domain maps to 1 to 158; that stretch reads MFYDEAKIYV…RWLVLELKLL (158 aa). Positions 159–328 constitute an OBG-type G domain; that stretch reads ADVGLIGLPN…LLYHVSGLLA (170 aa). Residues 165-172, 190-194, 212-215, 281-284, and 309-311 each bind GTP; these read GLPNAGKS, FTTLT, DIPG, NKMD, and SAA. 2 residues coordinate Mg(2+): Ser-172 and Thr-192. Residues 336–421 enclose the OCT domain; that stretch reads VTAPEEEKVT…IGKFEFEYVE (86 aa).

It belongs to the TRAFAC class OBG-HflX-like GTPase superfamily. OBG GTPase family. Monomer. Mg(2+) is required as a cofactor.

The protein resides in the cytoplasm. Its function is as follows. An essential GTPase which binds GTP, GDP and possibly (p)ppGpp with moderate affinity, with high nucleotide exchange rates and a fairly low GTP hydrolysis rate. Plays a role in control of the cell cycle, stress response, ribosome biogenesis and in those bacteria that undergo differentiation, in morphogenesis control. This Moorella thermoacetica (strain ATCC 39073 / JCM 9320) protein is GTPase Obg.